We begin with the raw amino-acid sequence, 165 residues long: MTAIRDNLCELKRLEIPRPKCQGMQFVATRGRQGFYRTIRENGAMYGIQLKPQGPKRPQLSSDLFNRPMTVPEENSEDVEEAQTSQPETRKVEMNNNNNYKISYTSRPPLPPQQPKQTYTLQRTTPQAQPTPQQPRMFSRSSGGITGAVNNRPQMVAQQREIAQK.

The tract at residues 49–165 (QLKPQGPKRP…VAQQREIAQK (117 aa)) is disordered. Positions 94–106 (MNNNNNYKISYTS) are enriched in polar residues. The span at 120–135 (TLQRTTPQAQPTPQQP) shows a compositional bias: low complexity. The span at 139-157 (SRSSGGITGAVNNRPQMVA) shows a compositional bias: polar residues.

This is an uncharacterized protein from Caenorhabditis elegans.